The chain runs to 182 residues: tRNA-splicing endonuclease (182 aa).

Residues Y119, H127, and K158 contribute to the active site.

Belongs to the tRNA-intron endonuclease family. Archaeal short subfamily. In terms of assembly, homotetramer; although the tetramer contains four active sites, only two participate in the cleavage. Therefore, it should be considered as a dimer of dimers.

The enzyme catalyses pretRNA = a 3'-half-tRNA molecule with a 5'-OH end + a 5'-half-tRNA molecule with a 2',3'-cyclic phosphate end + an intron with a 2',3'-cyclic phosphate and a 5'-hydroxyl terminus.. Its function is as follows. Endonuclease that removes tRNA introns. Cleaves pre-tRNA at the 5'- and 3'-splice sites to release the intron. The products are an intron and two tRNA half-molecules bearing 2',3' cyclic phosphate and 5'-OH termini. Recognizes a pseudosymmetric substrate in which 2 bulged loops of 3 bases are separated by a stem of 4 bp. The polypeptide is tRNA-splicing endonuclease (Saccharolobus solfataricus (strain ATCC 35092 / DSM 1617 / JCM 11322 / P2) (Sulfolobus solfataricus)).